The following is a 71-amino-acid chain: Long neurotoxin 2 (71 aa).

Intrachain disulfides connect cysteine 3/cysteine 20, cysteine 14/cysteine 41, cysteine 26/cysteine 30, cysteine 45/cysteine 56, and cysteine 57/cysteine 62.

The protein belongs to the three-finger toxin family. Long-chain subfamily. Type II alpha-neurotoxin sub-subfamily. In terms of tissue distribution, expressed by the venom gland.

It localises to the secreted. Binds with high affinity to muscular (alpha-1/CHRNA1) and neuronal (alpha-7/CHRNA7) nicotinic acetylcholine receptor (nAChR) and inhibits acetylcholine from binding to the receptor, thereby impairing neuromuscular and neuronal transmission. This chain is Long neurotoxin 2, found in Naja naja (Indian cobra).